Here is a 635-residue protein sequence, read N- to C-terminus: DNA topoisomerase 4 subunit B (635 aa).

ATP-binding positions include tyrosine 5, asparagine 45, aspartate 72, 113-119 (GLHGVGA), and lysine 340. The 116-residue stretch at 422-537 (RELFVVEGDS…KGHIYLALPP (116 aa)) folds into the Toprim domain. Mg(2+) is bound by residues glutamate 428, aspartate 502, and aspartate 504.

This sequence belongs to the type II topoisomerase family. ParE type 2 subfamily. As to quaternary structure, heterotetramer composed of ParC and ParE. It depends on Mg(2+) as a cofactor. Mn(2+) serves as cofactor. Ca(2+) is required as a cofactor.

It carries out the reaction ATP-dependent breakage, passage and rejoining of double-stranded DNA.. In terms of biological role, topoisomerase IV is essential for chromosome segregation. It relaxes supercoiled DNA. Performs the decatenation events required during the replication of a circular DNA molecule. The sequence is that of DNA topoisomerase 4 subunit B from Mycoplasma pneumoniae (strain ATCC 29342 / M129 / Subtype 1) (Mycoplasmoides pneumoniae).